The primary structure comprises 486 residues: Glutamyl-tRNA(Gln) amidotransferase subunit A (486 aa).

Residues K77 and S152 each act as charge relay system in the active site. The active-site Acyl-ester intermediate is S176.

Belongs to the amidase family. GatA subfamily. In terms of assembly, heterotrimer of A, B and C subunits.

The catalysed reaction is L-glutamyl-tRNA(Gln) + L-glutamine + ATP + H2O = L-glutaminyl-tRNA(Gln) + L-glutamate + ADP + phosphate + H(+). Allows the formation of correctly charged Gln-tRNA(Gln) through the transamidation of misacylated Glu-tRNA(Gln) in organisms which lack glutaminyl-tRNA synthetase. The reaction takes place in the presence of glutamine and ATP through an activated gamma-phospho-Glu-tRNA(Gln). The sequence is that of Glutamyl-tRNA(Gln) amidotransferase subunit A from Lactococcus lactis subsp. cremoris (strain SK11).